The chain runs to 135 residues: Ribosome-binding factor A (135 aa).

This sequence belongs to the RbfA family. As to quaternary structure, monomer. Binds 30S ribosomal subunits, but not 50S ribosomal subunits or 70S ribosomes.

The protein resides in the cytoplasm. One of several proteins that assist in the late maturation steps of the functional core of the 30S ribosomal subunit. Associates with free 30S ribosomal subunits (but not with 30S subunits that are part of 70S ribosomes or polysomes). Required for efficient processing of 16S rRNA. May interact with the 5'-terminal helix region of 16S rRNA. In Caldicellulosiruptor saccharolyticus (strain ATCC 43494 / DSM 8903 / Tp8T 6331), this protein is Ribosome-binding factor A.